Consider the following 344-residue polypeptide: Type VI secretion system component TssA1 (344 aa).

Homododecamer. Interacts with TssB1 and TssC1. Interacts with TssK1 and TssF1.

Its function is as follows. Core component of the H1 type VI (H1-T6SS) secretion system that plays a role in the release of toxins targeting both eukaryotic and prokaryotic species. Forms a dodecameric ring-shaped structure located at one end of the T6SS sheath. May properly attach the pre-assembled sheath onto the baseplate and/or stabilize the sheaths tubular structure. In Pseudomonas aeruginosa (strain ATCC 15692 / DSM 22644 / CIP 104116 / JCM 14847 / LMG 12228 / 1C / PRS 101 / PAO1), this protein is Type VI secretion system component TssA1.